Consider the following 466-residue polypeptide: Asparagine--tRNA ligase (466 aa).

This sequence belongs to the class-II aminoacyl-tRNA synthetase family. As to quaternary structure, homodimer.

The protein localises to the cytoplasm. The enzyme catalyses tRNA(Asn) + L-asparagine + ATP = L-asparaginyl-tRNA(Asn) + AMP + diphosphate + H(+). This chain is Asparagine--tRNA ligase, found in Buchnera aphidicola subsp. Schizaphis graminum (strain Sg).